Here is a 545-residue protein sequence, read N- to C-terminus: Capsular polysaccharide phosphotransferase SacB (545 aa).

The protein belongs to the stealth family.

In terms of biological role, may be the polymerase that links individual UDP-N-acetyl-D-mannosamine monomers. In serotype A the capsule is composed of repeated units of (alpha 1-6)-linked N-acetyl-D-mannosamine-1-phosphate. The protein is Capsular polysaccharide phosphotransferase SacB (sacB) of Neisseria meningitidis serogroup A.